The following is a 508-amino-acid chain: Bifunctional purine biosynthesis protein PurH (508 aa).

The MGS-like domain maps to 1–144; the sequence is MTRALLSVSD…KNFAGVLPIV (144 aa).

The protein belongs to the PurH family.

The catalysed reaction is (6R)-10-formyltetrahydrofolate + 5-amino-1-(5-phospho-beta-D-ribosyl)imidazole-4-carboxamide = 5-formamido-1-(5-phospho-D-ribosyl)imidazole-4-carboxamide + (6S)-5,6,7,8-tetrahydrofolate. It carries out the reaction IMP + H2O = 5-formamido-1-(5-phospho-D-ribosyl)imidazole-4-carboxamide. The protein operates within purine metabolism; IMP biosynthesis via de novo pathway; 5-formamido-1-(5-phospho-D-ribosyl)imidazole-4-carboxamide from 5-amino-1-(5-phospho-D-ribosyl)imidazole-4-carboxamide (10-formyl THF route): step 1/1. It participates in purine metabolism; IMP biosynthesis via de novo pathway; IMP from 5-formamido-1-(5-phospho-D-ribosyl)imidazole-4-carboxamide: step 1/1. This Leuconostoc citreum (strain KM20) protein is Bifunctional purine biosynthesis protein PurH.